The following is a 426-amino-acid chain: D-ribulose kinase (426 aa).

Substrate is bound by residues D8, 12-15, S72, and D221; that span reads SGAR. ATP-binding positions include S243, G281, and 376–380; that span reads GGAKN.

The protein belongs to the FGGY kinase family. Requires a divalent metal cation as cofactor.

The enzyme catalyses D-ribulose + ATP = D-ribulose 5-phosphate + ADP + H(+). Functionally, exhibits ATP hydrolysis without substrate. Phosphorylates D-ribulose. The chain is D-ribulose kinase from Synechococcus elongatus (strain ATCC 33912 / PCC 7942 / FACHB-805) (Anacystis nidulans R2).